We begin with the raw amino-acid sequence, 293 residues long: N-acetylneuraminate lyase (293 aa).

Serine 48 and serine 49 together coordinate aceneuramate. The Proton donor role is filled by tyrosine 137. Lysine 165 acts as the Schiff-base intermediate with substrate in catalysis. Aceneuramate is bound by residues threonine 167, glycine 189, aspartate 191, glutamate 192, and serine 208.

The protein belongs to the DapA family. NanA subfamily. Homotetramer.

The protein localises to the cytoplasm. The enzyme catalyses aceneuramate = aldehydo-N-acetyl-D-mannosamine + pyruvate. Its pathway is amino-sugar metabolism; N-acetylneuraminate degradation; D-fructose 6-phosphate from N-acetylneuraminate: step 1/5. Catalyzes the reversible aldol cleavage of N-acetylneuraminic acid (sialic acid; Neu5Ac) to form pyruvate and N-acetylmannosamine (ManNAc) via a Schiff base intermediate. The chain is N-acetylneuraminate lyase from Staphylococcus aureus (strain bovine RF122 / ET3-1).